A 298-amino-acid chain; its full sequence is Cytosolic Fe-S cluster assembly factor CFD1 (298 aa).

Residue 25–32 (GKGGVGKS) coordinates ATP. [4Fe-4S] cluster is bound by residues cysteine 215 and cysteine 218.

Belongs to the Mrp/NBP35 ATP-binding proteins family. NUBP2/CFD1 subfamily. As to quaternary structure, heterotetramer of 2 NBP35 and 2 CFD1 chains. It depends on [4Fe-4S] cluster as a cofactor.

It is found in the cytoplasm. In terms of biological role, component of the cytosolic iron-sulfur (Fe/S) protein assembly (CIA) machinery. Required for maturation of extramitochondrial Fe-S proteins. The NBP35-CFD1 heterotetramer forms a Fe-S scaffold complex, mediating the de novo assembly of an Fe-S cluster and its transfer to target apoproteins. Required for biogenesis and export of both ribosomal subunits, which may reflect a role in assembly of the Fe/S clusters in RLI1, a protein which performs rRNA processing and ribosome export. In Debaryomyces hansenii (strain ATCC 36239 / CBS 767 / BCRC 21394 / JCM 1990 / NBRC 0083 / IGC 2968) (Yeast), this protein is Cytosolic Fe-S cluster assembly factor CFD1.